The following is a 92-amino-acid chain: Protein OP-ORF (92 aa).

Positions Lys-53–Lys-82 form a coiled coil.

This chain is Protein OP-ORF, found in Rice dwarf virus (isolate Fujian) (RDV).